Here is a 147-residue protein sequence, read N- to C-terminus: Large ribosomal subunit protein bL9 (147 aa).

Belongs to the bacterial ribosomal protein bL9 family.

Binds to the 23S rRNA. In Clostridium botulinum (strain ATCC 19397 / Type A), this protein is Large ribosomal subunit protein bL9.